We begin with the raw amino-acid sequence, 85 residues long: Alpha-toxin BmalphaTx47 (85 aa).

The signal sequence occupies residues 1-19; the sequence is MNYLIVISFALLLMTGVQS. Residues 21–83 enclose the LCN-type CS-alpha/beta domain; the sequence is RDAYIADSEN…VPIRISGSCR (63 aa). 4 cysteine pairs are disulfide-bonded: Cys31/Cys82, Cys35/Cys55, Cys41/Cys65, and Cys45/Cys67.

This sequence belongs to the long (4 C-C) scorpion toxin superfamily. Sodium channel inhibitor family. Alpha subfamily. Expressed by the venom gland.

It localises to the secreted. Its function is as follows. Alpha toxins bind voltage-independently at site-3 of sodium channels (Nav) and inhibit the inactivation of the activated channels, thereby blocking neuronal transmission. This toxin expressed with the pET-14b vector has low inhibitory activity on sodium channels (11.33% on rNav1.2/SCN2A, 15.96% on mNav1.4/SCN4A and 5.04% on hNav1.5/SCN5A). When expressed with the pET-28a vector, this toxin has higher inhibitory activities (44.12% on rNav1.2/SCN2A, 25.40% on mNav1.4/SCN4A and 65.34% on hNav1.5/SCN5A). This Olivierus martensii (Manchurian scorpion) protein is Alpha-toxin BmalphaTx47.